A 364-amino-acid polypeptide reads, in one-letter code: Peptide chain release factor 1 (364 aa).

Q237 carries the N5-methylglutamine modification.

Belongs to the prokaryotic/mitochondrial release factor family. Post-translationally, methylated by PrmC. Methylation increases the termination efficiency of RF1.

It localises to the cytoplasm. Its function is as follows. Peptide chain release factor 1 directs the termination of translation in response to the peptide chain termination codons UAG and UAA. This Mycoplasma mycoides subsp. mycoides SC (strain CCUG 32753 / NCTC 10114 / PG1) protein is Peptide chain release factor 1.